We begin with the raw amino-acid sequence, 482 residues long: Arginine/ornithine antiporter (482 aa).

The Cytoplasmic segment spans residues 1–10 (MSQESSQKLR). A helical membrane pass occupies residues 11 to 31 (LGALTALVVGSMIGGGIFSLP). Residues 32–40 (QNMAASADV) lie on the Periplasmic side of the membrane. A helical membrane pass occupies residues 41 to 61 (GAVLIGWAITAVGMLTLAFVF). Residues 62 to 100 (QTLANRKPELDGGVYAYAKAGFGDYMGFSSAWGYWISAW) are Cytoplasmic-facing. Residues 101-121 (LGNVGYFVLLFSTLGYFFPIF) form a helical membrane-spanning segment. Over 122-124 (GKG) the chain is Periplasmic. Residues 125–145 (DTVAAIVCASVLLWALHFLVL) traverse the membrane as a helical segment. The Cytoplasmic segment spans residues 146 to 156 (RGIKEAAFINT). A helical transmembrane segment spans residues 157–177 (VTTVAKVVPLFLFILICLFAF). At 178–202 (KLDIFTADIWGKSNPDLGSVMNQVR) the chain is on the periplasmic side. The chain crosses the membrane as a helical span at residues 203–223 (NMMLVTVWVFIGIEGASIFSS). At 224-235 (RAEKRSDVGKAT) the chain is on the cytoplasmic side. Residues 236 to 256 (VIGFITVLLLLVLVNVLSMGV) traverse the membrane as a helical segment. Residues 257–283 (MTQPELAKLQNPSMALVLEHVVGHWGA) are Periplasmic-facing. Residues 284–304 (VLISVGLLISLLGALLSWVLL) traverse the membrane as a helical segment. Over 305–333 (CAEIMFAAAKDHTMPEFLRRENANQVPAN) the chain is Cytoplasmic. Residues 334-354 (ALWLTNICVQVFLVVVFFTSG) form a helical membrane-spanning segment. Residues 355-365 (DPDGMDPYTKM) are Periplasmic-facing. The helical transmembrane segment at 366-386 (LLLATSMILIPYFWSAAYGLL) threads the bilayer. Residues 387–403 (LTLKGETYENDARERSK) are Cytoplasmic-facing. A helical transmembrane segment spans residues 404-424 (DLVIAGIAVAYAVWLLYAGGL). Residue Lys-425 is a topological domain, periplasmic. Residues 426–446 (YLLLSALLYAPGAILFAKAKH) form a helical membrane-spanning segment. The Cytoplasmic segment spans residues 447 to 458 (EVGQPIFTGIEK). A helical transmembrane segment spans residues 459–479 (LIFAAVVIGALVAAYGLYDGF). Topologically, residues 480–482 (LTL) are periplasmic.

The protein belongs to the amino acid-polyamine-organocation (APC) superfamily. Basic amino acid/polyamine antiporter (APA) (TC 2.A.3.2) family.

It is found in the cell inner membrane. The enzyme catalyses L-ornithine(in) + L-arginine(out) = L-ornithine(out) + L-arginine(in). Catalyzes electroneutral exchange between arginine and ornithine to allow high-efficiency energy conversion in the arginine deiminase pathway. Also mediates the proton motive force-driven uptake of arginine and ornithine, but the exchange is several orders of magnitude faster than the proton motive force-driven transport. The sequence is that of Arginine/ornithine antiporter from Pseudomonas aeruginosa (strain ATCC 15692 / DSM 22644 / CIP 104116 / JCM 14847 / LMG 12228 / 1C / PRS 101 / PAO1).